The chain runs to 228 residues: U1 small nuclear ribonucleoprotein C (228 aa).

A Matrin-type; degenerate zinc finger spans residues 11 to 43 (ATVDYCDIFLTHDSASVRKAHNTGWKHKMQVEH). Residues 83–127 (GQRGQPVGGPPRPPQPFHNGGRPGPPGRPPMGMFPPQRPMMPPPH) are disordered. Over residues 105-127 (PGPPGRPPMGMFPPQRPMMPPPH) the composition is skewed to pro residues.

This sequence belongs to the U1 small nuclear ribonucleoprotein C family. U1 snRNP is composed of the 7 core Sm proteins B/B', D1, D2, D3, E, F and G that assemble in a heptameric protein ring on the Sm site of the small nuclear RNA to form the core snRNP, and at least 3 U1 snRNP-specific proteins U1-70K, U1-A and U1-C. U1-C interacts with U1 snRNA and the 5' splice-site region of the pre-mRNA.

The protein localises to the nucleus. Functionally, component of the spliceosomal U1 snRNP, which is essential for recognition of the pre-mRNA 5' splice-site and the subsequent assembly of the spliceosome. U1-C is directly involved in initial 5' splice-site recognition for both constitutive and regulated alternative splicing. The interaction with the 5' splice-site seems to precede base-pairing between the pre-mRNA and the U1 snRNA. Stimulates commitment or early (E) complex formation by stabilizing the base pairing of the 5' end of the U1 snRNA and the 5' splice-site region. The protein is U1 small nuclear ribonucleoprotein C of Batrachochytrium dendrobatidis (strain JAM81 / FGSC 10211) (Frog chytrid fungus).